The chain runs to 496 residues: Probable uroporphyrinogen-III C-methyltransferase (496 aa).

Belongs to the precorrin methyltransferase family.

It catalyses the reaction uroporphyrinogen III + 2 S-adenosyl-L-methionine = precorrin-2 + 2 S-adenosyl-L-homocysteine + H(+). In terms of biological role, siroheme synthase involved in methionine biosynthesis. The polypeptide is Probable uroporphyrinogen-III C-methyltransferase (Schizosaccharomyces pombe (strain 972 / ATCC 24843) (Fission yeast)).